Consider the following 86-residue polypeptide: Small ribosomal subunit protein bS20 (86 aa).

Residues 1–16 are compositionally biased toward basic and acidic residues; the sequence is MANIKSQEKRIRTNER. Positions 1-25 are disordered; the sequence is MANIKSQEKRIRTNERRRLRNQSVK.

Belongs to the bacterial ribosomal protein bS20 family.

Binds directly to 16S ribosomal RNA. The protein is Small ribosomal subunit protein bS20 of Mycobacterium sp. (strain JLS).